The following is a 237-amino-acid chain: Probable transcriptional regulatory protein Fjoh_2560 (237 aa).

It belongs to the TACO1 family.

The protein resides in the cytoplasm. The polypeptide is Probable transcriptional regulatory protein Fjoh_2560 (Flavobacterium johnsoniae (strain ATCC 17061 / DSM 2064 / JCM 8514 / BCRC 14874 / CCUG 350202 / NBRC 14942 / NCIMB 11054 / UW101) (Cytophaga johnsonae)).